The following is a 440-amino-acid chain: Protein disulfide-isomerase A6 homolog (440 aa).

An N-terminal signal peptide occupies residues 1–18 (MALIKLLLASLAITSVCG). 2 consecutive Thioredoxin domains span residues 19–131 (MYSK…AEAK) and 127–273 (LAEA…ARAQ). Catalysis depends on nucleophile residues Cys54 and Cys57. The cysteines at positions 54 and 57 are disulfide-linked. Residues 138–164 (LGGKSSGSSSSGSGSGSGKRGGGGSGN) form a disordered region. Over residues 139 to 149 (GGKSSGSSSSG) the composition is skewed to low complexity. Residues 150-163 (SGSGSGKRGGGGSG) show a composition bias toward gly residues. Active-site nucleophile residues include Cys194 and Cys197. Residues Cys194 and Cys197 are joined by a disulfide bond. The disordered stretch occupies residues 404–426 (DGFPKIQKTEKWDGKDGALPAED). Residues 410-419 (QKTEKWDGKD) show a composition bias toward basic and acidic residues. Positions 437-440 (KTEL) match the Prevents secretion from ER motif.

It belongs to the protein disulfide isomerase family.

It localises to the endoplasmic reticulum lumen. It catalyses the reaction Catalyzes the rearrangement of -S-S- bonds in proteins.. Its function is as follows. May function as a chaperone that inhibits aggregation of misfolded proteins. May negatively regulate the unfolded protein response (UPR) through binding to UPR sensors. In Caenorhabditis elegans, this protein is Protein disulfide-isomerase A6 homolog.